Here is a 239-residue protein sequence, read N- to C-terminus: MARGCLCCVKYMLFLFNLLFWLGGCGLLGVGVWLSVSQGSFATLSPSFPSISAANLIITLGAVIMVTGFLGCLGAIKENKCLLLSFFITLLVILLAELILLILFFVYTDNVSENARQDLKEGLALYSTNNNAGLRNAWNTIQTEWHCCGVNGYTDWHTALQEKVVPDHCCQDIYQDCGRNATNQFWTRGCYEKVEEWLDDNKHLLGTIAMCVLVIQLLGMAFSMTLYQQIHRSGKKYEA.

At 1–12 the chain is on the cytoplasmic side; sequence MARGCLCCVKYM. Residues 13 to 33 traverse the membrane as a helical segment; it reads LFLFNLLFWLGGCGLLGVGVW. The Extracellular segment spans residues 34–55; that stretch reads LSVSQGSFATLSPSFPSISAAN. A helical transmembrane segment spans residues 56-76; sequence LIITLGAVIMVTGFLGCLGAI. Residues 77–85 lie on the Cytoplasmic side of the membrane; the sequence is KENKCLLLS. Residues 86–106 form a helical membrane-spanning segment; it reads FFITLLVILLAELILLILFFV. Topologically, residues 107-203 are extracellular; it reads YTDNVSENAR…VEEWLDDNKH (97 aa). N-linked (GlcNAc...) asparagine glycans are attached at residues Asn-110 and Asn-180. A helical transmembrane segment spans residues 204-224; it reads LLGTIAMCVLVIQLLGMAFSM. The Cytoplasmic segment spans residues 225–239; it reads TLYQQIHRSGKKYEA.

Belongs to the tetraspanin (TM4SF) family.

It localises to the membrane. The sequence is that of Tetraspanin-9 (tspan9) from Salmo salar (Atlantic salmon).